Reading from the N-terminus, the 257-residue chain is Major prion protein (257 aa).

The signal sequence occupies residues Met-1–Cys-24. Residues Lys-25–Tyr-41 are interaction with ADGRG6. Residues Lys-25–Ala-234 form an interaction with GRB2, ERI3 and SYN1 region. The disordered stretch occupies residues Arg-27–Lys-114. Repeat copies occupy residues Pro-54–Gln-62, Pro-63–Gln-70, Pro-71–Gln-78, Pro-79–Gln-86, and Pro-87–Gln-95. The tract at residues Pro-54–Gln-95 is 5 X 8 AA tandem repeats of P-H-G-G-G-W-G-Q. Positions Gln-55 to Gly-101 are enriched in gly residues. Residues His-64, Gly-65, Gly-66, His-72, Gly-73, Gly-74, His-80, Gly-81, Gly-82, His-88, Gly-90, and Gly-91 each contribute to the Cu(2+) site. Cys-183 and Cys-218 are oxidised to a cystine. Asn-185 and Asn-201 each carry an N-linked (GlcNAc...) asparagine glycan. Residue Ala-234 is the site of GPI-anchor amidated alanine attachment. The propeptide at Ser-235–Gly-257 is removed in mature form.

The protein belongs to the prion family. In terms of assembly, monomer and homodimer. Has a tendency to aggregate into amyloid fibrils containing a cross-beta spine, formed by a steric zipper of superposed beta-strands. Soluble oligomers may represent an intermediate stage on the path to fibril formation. Copper binding may promote oligomerization. Interacts with GRB2, APP, ERI3/PRNPIP and SYN1. Mislocalized cytosolically exposed PrP interacts with MGRN1; this interaction alters MGRN1 subcellular location and causes lysosomal enlargement. Interacts with APP. Interacts with KIAA1191. Interacts with ADGRG6.

It is found in the cell membrane. The protein resides in the golgi apparatus. Its function is as follows. Its primary physiological function is unclear. May play a role in neuronal development and synaptic plasticity. May be required for neuronal myelin sheath maintenance. May promote myelin homeostasis through acting as an agonist for ADGRG6 receptor. May play a role in iron uptake and iron homeostasis. Soluble oligomers are toxic to cultured neuroblastoma cells and induce apoptosis (in vitro). Association with GPC1 (via its heparan sulfate chains) targets PRNP to lipid rafts. Also provides Cu(2+) or Zn(2+) for the ascorbate-mediated GPC1 deaminase degradation of its heparan sulfate side chains. The chain is Major prion protein (PRNP) from Neovison vison (American mink).